The primary structure comprises 139 residues: Transcription antitermination protein NusB (139 aa).

The protein belongs to the NusB family.

Its function is as follows. Involved in transcription antitermination. Required for transcription of ribosomal RNA (rRNA) genes. Binds specifically to the boxA antiterminator sequence of the ribosomal RNA (rrn) operons. The sequence is that of Transcription antitermination protein NusB from Limosilactobacillus fermentum (strain NBRC 3956 / LMG 18251) (Lactobacillus fermentum).